The chain runs to 197 residues: Tic20 family protein Ycf60 (197 aa).

The next 5 helical transmembrane spans lie at Ile-3–Val-23, Phe-47–Leu-66, Leu-81–Phe-101, Val-118–Leu-138, and Met-141–Gly-161.

This sequence belongs to the Tic20 family.

Its subcellular location is the plastid. The protein localises to the chloroplast membrane. This is Tic20 family protein Ycf60 (ycf60) from Cyanidioschyzon merolae (strain NIES-3377 / 10D) (Unicellular red alga).